The sequence spans 356 residues: Protein RecA (356 aa).

69 to 76 serves as a coordination point for ATP; sequence GPESSGKT.

It belongs to the RecA family.

The protein localises to the cytoplasm. In terms of biological role, can catalyze the hydrolysis of ATP in the presence of single-stranded DNA, the ATP-dependent uptake of single-stranded DNA by duplex DNA, and the ATP-dependent hybridization of homologous single-stranded DNAs. It interacts with LexA causing its activation and leading to its autocatalytic cleavage. This is Protein RecA from Gloeothece citriformis (strain PCC 7424) (Cyanothece sp. (strain PCC 7424)).